The sequence spans 272 residues: uncharacterized protein (272 aa).

Catalysis depends on residues D71 and E163.

Belongs to the glycosyl hydrolase 25 family.

This is an uncharacterized protein from Escherichia coli (strain K12).